A 309-amino-acid polypeptide reads, in one-letter code: Aspartate carbamoyltransferase catalytic subunit (309 aa).

Carbamoyl phosphate-binding residues include R55 and T56. L-aspartate is bound at residue K85. The carbamoyl phosphate site is built by R106, H135, and Q138. Positions 168 and 230 each coordinate L-aspartate. Positions 268 and 269 each coordinate carbamoyl phosphate.

Belongs to the aspartate/ornithine carbamoyltransferase superfamily. ATCase family. In terms of assembly, heterododecamer (2C3:3R2) of six catalytic PyrB chains organized as two trimers (C3), and six regulatory PyrI chains organized as three dimers (R2).

The enzyme catalyses carbamoyl phosphate + L-aspartate = N-carbamoyl-L-aspartate + phosphate + H(+). It participates in pyrimidine metabolism; UMP biosynthesis via de novo pathway; (S)-dihydroorotate from bicarbonate: step 2/3. Functionally, catalyzes the condensation of carbamoyl phosphate and aspartate to form carbamoyl aspartate and inorganic phosphate, the committed step in the de novo pyrimidine nucleotide biosynthesis pathway. In Aliivibrio salmonicida (strain LFI1238) (Vibrio salmonicida (strain LFI1238)), this protein is Aspartate carbamoyltransferase catalytic subunit.